Reading from the N-terminus, the 84-residue chain is Defensin-like protein 49 (84 aa).

The first 29 residues, M1–G29, serve as a signal peptide directing secretion. 4 disulfide bridges follow: C40–C82, C44–C68, C54–C80, and C58–C81.

It belongs to the DEFL family.

Its subcellular location is the secreted. The polypeptide is Defensin-like protein 49 (Arabidopsis thaliana (Mouse-ear cress)).